Here is a 297-residue protein sequence, read N- to C-terminus: Putative thiosulfate sulfurtransferase SseA (297 aa).

Rhodanese domains are found at residues 31–138 and 168–286; these read GAPG…ETTL and ILDA…VPIV. Catalysis depends on Cys-245, which acts as the Cysteine persulfide intermediate. Substrate is bound at residue Arg-250.

The catalysed reaction is thiosulfate + hydrogen cyanide = thiocyanate + sulfite + 2 H(+). This is Putative thiosulfate sulfurtransferase SseA (sseA) from Mycobacterium bovis (strain ATCC BAA-935 / AF2122/97).